Here is a 145-residue protein sequence, read N- to C-terminus: Hemoglobin subunit beta (145 aa).

One can recognise a Globin domain in the interval 1-145 (MLTAEEKAAV…VANALAHRYH (145 aa)). T11 carries the post-translational modification Phosphothreonine. A Phosphoserine modification is found at S43. The residue at position 58 (K58) is an N6-acetyllysine. H62 contributes to the heme b binding site. An N6-acetyllysine modification is found at K81. H91 serves as a coordination point for heme b. Position 92 is an S-nitrosocysteine (C92).

This sequence belongs to the globin family. As to quaternary structure, heterotetramer of two alpha chains and two beta chains. As to expression, red blood cells.

Functionally, involved in oxygen transport from the lung to the various peripheral tissues. The polypeptide is Hemoglobin subunit beta (HBB) (Bos mutus grunniens (Wild yak)).